We begin with the raw amino-acid sequence, 91 residues long: DNA-directed RNA polymerase subunit omega (91 aa).

This sequence belongs to the RNA polymerase subunit omega family. The RNAP catalytic core consists of 2 alpha, 1 beta, 1 beta' and 1 omega subunit. When a sigma factor is associated with the core the holoenzyme is formed, which can initiate transcription.

The enzyme catalyses RNA(n) + a ribonucleoside 5'-triphosphate = RNA(n+1) + diphosphate. In terms of biological role, promotes RNA polymerase assembly. Latches the N- and C-terminal regions of the beta' subunit thereby facilitating its interaction with the beta and alpha subunits. The sequence is that of DNA-directed RNA polymerase subunit omega from Erwinia tasmaniensis (strain DSM 17950 / CFBP 7177 / CIP 109463 / NCPPB 4357 / Et1/99).